The sequence spans 500 residues: Probable cytosol aminopeptidase (500 aa).

Mn(2+) contacts are provided by lysine 265 and aspartate 270. Lysine 277 is a catalytic residue. Residues aspartate 288, aspartate 347, and glutamate 349 each contribute to the Mn(2+) site. The active site involves arginine 351.

It belongs to the peptidase M17 family. The cofactor is Mn(2+).

It is found in the cytoplasm. It carries out the reaction Release of an N-terminal amino acid, Xaa-|-Yaa-, in which Xaa is preferably Leu, but may be other amino acids including Pro although not Arg or Lys, and Yaa may be Pro. Amino acid amides and methyl esters are also readily hydrolyzed, but rates on arylamides are exceedingly low.. The enzyme catalyses Release of an N-terminal amino acid, preferentially leucine, but not glutamic or aspartic acids.. Presumably involved in the processing and regular turnover of intracellular proteins. Catalyzes the removal of unsubstituted N-terminal amino acids from various peptides. This Rickettsia typhi (strain ATCC VR-144 / Wilmington) protein is Probable cytosol aminopeptidase.